The chain runs to 256 residues: Phosphonates import ATP-binding protein PhnC (256 aa).

An ABC transporter domain is found at 5–253 (LRITGLVKEY…MLKTIYGGES (249 aa)). 38–45 (GPSGTGKS) provides a ligand contact to ATP.

Belongs to the ABC transporter superfamily. Phosphonates importer (TC 3.A.1.9.1) family. The complex is composed of two ATP-binding proteins (PhnC), two transmembrane proteins (PhnE) and a solute-binding protein (PhnD).

It localises to the cell inner membrane. The enzyme catalyses phosphonate(out) + ATP + H2O = phosphonate(in) + ADP + phosphate + H(+). Functionally, part of the ABC transporter complex PhnCDE involved in phosphonates import. Responsible for energy coupling to the transport system. The polypeptide is Phosphonates import ATP-binding protein PhnC (Bordetella parapertussis (strain 12822 / ATCC BAA-587 / NCTC 13253)).